The sequence spans 350 residues: D-alanine--D-alanine ligase (350 aa).

The ATP-grasp domain maps to 135–335; sequence KLYAKNLGVK…LAQSLPKTPK (201 aa). Position 164–219 (164–219) interacts with ATP; sequence KPSFNFPFIVKPNNAGSSLGVSVVKEEKELAYALDGAFEYSKEVLIEPFIQRVKEY. Mg(2+) is bound by residues Asp-291, Glu-303, and Asn-305.

Belongs to the D-alanine--D-alanine ligase family. Mg(2+) serves as cofactor. Requires Mn(2+) as cofactor.

The protein localises to the cytoplasm. The catalysed reaction is 2 D-alanine + ATP = D-alanyl-D-alanine + ADP + phosphate + H(+). It functions in the pathway cell wall biogenesis; peptidoglycan biosynthesis. Its function is as follows. Cell wall formation. In Helicobacter acinonychis (strain Sheeba), this protein is D-alanine--D-alanine ligase.